A 381-amino-acid polypeptide reads, in one-letter code: MSKRDYYDVLGVSKGASADEIKKAYRGKAKELHPDRNKDNPDAESLFKEVNEAYEVLKDAEKKAAYDRFGHAAFEGGMGGGQRPGGGFGSGDFSSAFSDVFEDLFGDFMGGQRGGGGRRAARGSDLRYNLRVTLEEAFSGLQKTINVPTAVACSSCEGTGAEGGVEPTTCPTCSGMGKVRAQQGFFTVERTCPTCSGLGQIIKNPCKSCRGQGRVEKDRALSVNIPAGVETGTRIRLAGEGEAGMRGGPPGDLYIFVEVAKHELFERDGVNLYCRVPVSMAKAALGGAIEVPTIDGGRGRVQVPAGSQSGRQMRLRSKGMPALRGGGIGDMFIELAVETPVNLTSKQKDLLREFDELSEDNNPETKSFFSSVKSFWDGMKG.

The region spanning Asp5–Gly70 is the J domain. A CR-type zinc finger spans residues Gly140–Asp218. Residues Cys153, Cys156, Cys170, Cys173, Cys192, Cys195, Cys206, and Cys209 each coordinate Zn(2+). CXXCXGXG motif repeat units follow at residues Cys153–Gly160, Cys170–Gly177, Cys192–Gly199, and Cys206–Gly213.

The protein belongs to the DnaJ family. As to quaternary structure, homodimer. It depends on Zn(2+) as a cofactor.

The protein resides in the cytoplasm. In terms of biological role, participates actively in the response to hyperosmotic and heat shock by preventing the aggregation of stress-denatured proteins and by disaggregating proteins, also in an autonomous, DnaK-independent fashion. Unfolded proteins bind initially to DnaJ; upon interaction with the DnaJ-bound protein, DnaK hydrolyzes its bound ATP, resulting in the formation of a stable complex. GrpE releases ADP from DnaK; ATP binding to DnaK triggers the release of the substrate protein, thus completing the reaction cycle. Several rounds of ATP-dependent interactions between DnaJ, DnaK and GrpE are required for fully efficient folding. Also involved, together with DnaK and GrpE, in the DNA replication of plasmids through activation of initiation proteins. This is Chaperone protein DnaJ from Ruegeria pomeroyi (strain ATCC 700808 / DSM 15171 / DSS-3) (Silicibacter pomeroyi).